A 292-amino-acid polypeptide reads, in one-letter code: Cbb3-type cytochrome c oxidase subunit CcoP (292 aa).

Helical transmembrane passes span 11–31 (FGLI…SSLI) and 62–82 (VGWI…FFFG). Cytochrome c domains are found at residues 116-195 (ELVD…MAEI) and 205-288 (QLID…QSLK). Residues cysteine 129, cysteine 132, histidine 133, methionine 174, cysteine 219, cysteine 222, histidine 223, and methionine 264 each contribute to the heme c site.

Belongs to the CcoP / FixP family. Component of the cbb3-type cytochrome c oxidase at least composed of CcoN, CcoO, CcoQ and CcoP. Heme c serves as cofactor.

It is found in the cell inner membrane. It participates in energy metabolism; oxidative phosphorylation. C-type cytochrome. Part of the cbb3-type cytochrome c oxidase complex. CcoP subunit is required for transferring electrons from donor cytochrome c via its heme groups to CcoO subunit. From there, electrons are shuttled to the catalytic binuclear center of CcoN subunit where oxygen reduction takes place. The complex also functions as a proton pump. The protein is Cbb3-type cytochrome c oxidase subunit CcoP of Helicobacter pylori (Campylobacter pylori).